The sequence spans 299 residues: UDP-3-O-acyl-N-acetylglucosamine deacetylase (299 aa).

H75, H232, and D236 together coordinate Zn(2+). H259 acts as the Proton donor in catalysis.

It belongs to the LpxC family. Requires Zn(2+) as cofactor.

The catalysed reaction is a UDP-3-O-[(3R)-3-hydroxyacyl]-N-acetyl-alpha-D-glucosamine + H2O = a UDP-3-O-[(3R)-3-hydroxyacyl]-alpha-D-glucosamine + acetate. It participates in glycolipid biosynthesis; lipid IV(A) biosynthesis; lipid IV(A) from (3R)-3-hydroxytetradecanoyl-[acyl-carrier-protein] and UDP-N-acetyl-alpha-D-glucosamine: step 2/6. In terms of biological role, catalyzes the hydrolysis of UDP-3-O-myristoyl-N-acetylglucosamine to form UDP-3-O-myristoylglucosamine and acetate, the committed step in lipid A biosynthesis. This chain is UDP-3-O-acyl-N-acetylglucosamine deacetylase, found in Helicobacter hepaticus (strain ATCC 51449 / 3B1).